The following is a 315-amino-acid chain: MTTPSIKLNSGYDMPLVGFGLWKVNKETCADQIYHAIKAGYRLFDGACDYGNEVEAGKGVARAIQEGIVKREELFIVSKLWNSFHDGDRVEPICRKQLADWGLDYFDLFIVHFPIALKYVDPAVRYPPGWLSENNKLEFSNASIQETWTAMESLVDKKLARSIGVSNFSAQLLMDLLRYARIRPATLQIEHHPYLTQERLVTYAQKEGIAVTAYSSFGPLSFVELDLKDAHETPKLFDHDVIKGIAQKHGRTPAQVLLRWATQRNIAVIPKSNDPTRLAQNLDVTGWDLEASEIEAISALNRNLRFNDPLAIPVV.

Catalysis depends on tyrosine 50, which acts as the Proton donor. Residue histidine 112 coordinates substrate. NAD(+) contacts are provided by residues 166-167 (SN), 215-224 (SSFGPLSFVE), and 271-281 (KSNDPTRLAQN).

This sequence belongs to the aldo/keto reductase family.

It carries out the reaction xylitol + NAD(+) = D-xylose + NADH + H(+). The catalysed reaction is xylitol + NADP(+) = D-xylose + NADPH + H(+). It functions in the pathway carbohydrate metabolism; D-xylose degradation. In terms of biological role, catalyzes the initial reaction in the xylose utilization pathway by reducing D-xylose into xylitol. Xylose is a major component of hemicelluloses such as xylan. Most fungi utilize D-xylose via three enzymatic reactions, xylose reductase (XR), xylitol dehydrogenase (XDH), and xylulokinase, to form xylulose 5-phosphate, which enters pentose phosphate pathway. In Aspergillus fumigatus (strain ATCC MYA-4609 / CBS 101355 / FGSC A1100 / Af293) (Neosartorya fumigata), this protein is Probable NAD(P)H-dependent D-xylose reductase xyl1 (xyl1).